The sequence spans 217 residues: Adapter protein MecA (217 aa).

It belongs to the MecA family. As to quaternary structure, homodimer.

Its function is as follows. Enables the recognition and targeting of unfolded and aggregated proteins to the ClpC protease or to other proteins involved in proteolysis. This Listeria welshimeri serovar 6b (strain ATCC 35897 / DSM 20650 / CCUG 15529 / CIP 8149 / NCTC 11857 / SLCC 5334 / V8) protein is Adapter protein MecA.